A 663-amino-acid chain; its full sequence is MPKSWSRVVISSVAPAIDGGQWPIKRAVGEQVEVTAGVLVDSHDALAVELVVRHASEETEHVTRMPHVENDEYAGAFEVSAPGRYLYRVRAWINRFATWQDQFRRRVEGGEPPSEIESELTAGASLLDEAAEHAPEDDREMLTAHIEAFENGNAEAALGDEIAELARRHAPHHQQTSSATYEVFVDPERARTGAWYEFFPRSVRDDDEHATLDEAAERLPRIQEMGFDIVYLPPIHPIGETNRKGPDDAPEAGPDDPGSPWAIGGFLADGSKGGHKSVHPKLGGIEAFDRFVETAHDLGLEVALDVAFQCSPDHPYVEEHPEWFYHRPDGSLRYAENPPKKYKDVHPINFETEAWPALWAELKSVFEYWIDHGVTTFRVDNPHTKPFAFWQWCLRELREDTPELVVLSEAFTRPKTMYHLAKLGFNNSYTYFTWRNTPDALEAYGEELFHTEAAEYFRPNFWPNTPDILHDELVDGGRPAHKSRFVLAATMSSTYGVYGPPFEHVDTQQRDHKEEYARNEKYEIRTWDWNDPTSLQPFMARVNRLRNENPALQQTRSIRFLDTQHPDLIAYSKAAGDNLIVVVVSLDPHSECEGQLVLPIHDLGLPADEAFSAHDLLHDAHYTWQGTHHYLRLSPDRPAHIFRLEPAGTSEQTHAAYDRLVHA.

Positions 238–266 (IGETNRKGPDDAPEAGPDDPGSPWAIGGF) are disordered. The alpha-maltose 1-phosphate site is built by Lys244, Gln309, and Asp344. Asp380 (nucleophile) is an active-site residue. Asn381 is a binding site for alpha-maltose 1-phosphate. Residue Glu409 is the Proton donor of the active site. 521–522 (KY) serves as a coordination point for alpha-maltose 1-phosphate.

The protein belongs to the glycosyl hydrolase 13 family. GlgE subfamily. Homodimer.

It carries out the reaction alpha-maltose 1-phosphate + [(1-&gt;4)-alpha-D-glucosyl](n) = [(1-&gt;4)-alpha-D-glucosyl](n+2) + phosphate. Functionally, maltosyltransferase that uses maltose 1-phosphate (M1P) as the sugar donor to elongate linear or branched alpha-(1-&gt;4)-glucans. Is involved in a branched alpha-glucan biosynthetic pathway from trehalose, together with TreS, Mak and GlgB. This Salinibacter ruber (strain DSM 13855 / M31) protein is Alpha-1,4-glucan:maltose-1-phosphate maltosyltransferase.